Consider the following 226-residue polypeptide: PKHD-type hydroxylase Sde_2812 (226 aa).

The region spanning 78 to 178 (KIFPPLFNCY…RLASFFWLQS (101 aa)) is the Fe2OG dioxygenase domain. Residues histidine 96, aspartate 98, and histidine 159 each coordinate Fe cation. Arginine 169 contributes to the 2-oxoglutarate binding site.

Fe(2+) serves as cofactor. The cofactor is L-ascorbate.

The sequence is that of PKHD-type hydroxylase Sde_2812 from Saccharophagus degradans (strain 2-40 / ATCC 43961 / DSM 17024).